Here is a 638-residue protein sequence, read N- to C-terminus: E3 ubiquitin-protein ligase TRIM47 (638 aa).

Methionine 1 is subject to N-acetylmethionine. An RING-type zinc finger spans residues 9-58 (CPICLEPLREPVTLPCGHNFCLACLGALWPHRGASGAGGPGGAARCPLCQ). The residue at position 72 (threonine 72) is a Phosphothreonine. The interval 79-119 (LRQGSGPGSGPGPAPALAPEPSAPSALPSVPEPSAPCAPEP) is disordered. Pro residues-rich tracts occupy residues 88 to 100 (GPGPAPALAPEPS) and 108 to 119 (VPEPSAPCAPEP). A B box-type zinc finger spans residues 177–217 (LEESLCPRHLRPLERYCRAERVCLCEACAAQEHRGHELVPL). Zn(2+) contacts are provided by cysteine 182, histidine 185, cysteine 204, and histidine 209. Residues 296 to 324 (MLGRSQGDLRRQEEQRSRLSRARQNLSQV) are a coiled coil. Disordered regions lie at residues 300-322 (SQGDLRRQEEQRSRLSRARQNLS) and 384-411 (LRGPGGNEDGPQKLDSEADAEPQDLEST). Basic and acidic residues predominate over residues 302-312 (GDLRRQEEQRS). Residues 410–631 (STNLLESEAP…LQIGPLKKSC (222 aa)) enclose the B30.2/SPRY domain. Residue serine 461 is modified to Phosphoserine. An Omega-N-methylarginine modification is found at arginine 582. Serine 588 carries the phosphoserine modification.

The protein belongs to the TRIM/RBCC family. Low expression in most tissues. Higher expression in kidney tubular cells. Overexpressed in astrocytoma tumor cells.

It is found in the cytoplasm. The protein resides in the nucleus. The catalysed reaction is S-ubiquitinyl-[E2 ubiquitin-conjugating enzyme]-L-cysteine + [acceptor protein]-L-lysine = [E2 ubiquitin-conjugating enzyme]-L-cysteine + N(6)-ubiquitinyl-[acceptor protein]-L-lysine.. It participates in protein modification; protein ubiquitination. Its function is as follows. E3 ubiquitin-protein ligase that mediates the ubiquitination and proteasomal degradation of CYLD. This chain is E3 ubiquitin-protein ligase TRIM47, found in Homo sapiens (Human).